A 959-amino-acid chain; its full sequence is Protovillin (959 aa).

Residues 1–53 (MEPPLELPTQRKRVIPSKFGILKRNAEIEAEKNRENLQQSSCFSHINEIGKEI) form a tail region. A core region spans residues 54-832 (GLEIWKIIDD…PIMLPTSGVT (779 aa)). Gelsolin-like repeat units lie at residues 64 to 116 (STIQ…SQET), 204 to 244 (IRVK…LEKG), 309 to 366 (IKLY…DQRT), 479 to 529 (RNKF…EDKG), 603 to 647 (INIH…KEAA), and 713 to 754 (FKVF…TEKL). 2 tandem repeats follow at residues 840-849 (TPKPITTPTV) and 851-860 (TPKPITTPTV). The segment at 840 to 860 (TPKPITTPTVTTPKPITTPTV) is 2 X 10 AA repeats of T-P-K-P-I-T-T-P-T-V. An HP domain is found at 895–959 (TTITTFYPLS…KQLRVDNGLF (65 aa)).

The protein belongs to the villin/gelsolin family.

It is found in the cytoplasm. Its subcellular location is the cytoskeleton. Its function is as follows. Caps actin filaments but displays neither severing nor cross-linking nor nucleating activities. Protovillin seems to be a villin precursor with only archaic capping activity. It lacks essential changes in the sequence to allow bundling of actin filaments and consequently the appearance of microvilli. In Dictyostelium discoideum (Social amoeba), this protein is Protovillin (vilB).